Reading from the N-terminus, the 286-residue chain is Shikimate dehydrogenase (NADP(+)) (286 aa).

Shikimate contacts are provided by residues 20-22 (SLS) and Ser-67. The active-site Proton acceptor is the Lys-71. Positions 92 and 107 each coordinate shikimate. NADP(+)-binding positions include 131-135 (GGGGA) and Ala-230. Residue Tyr-232 coordinates shikimate. Residue Gly-253 coordinates NADP(+).

It belongs to the shikimate dehydrogenase family. As to quaternary structure, homodimer.

The enzyme catalyses shikimate + NADP(+) = 3-dehydroshikimate + NADPH + H(+). The protein operates within metabolic intermediate biosynthesis; chorismate biosynthesis; chorismate from D-erythrose 4-phosphate and phosphoenolpyruvate: step 4/7. In terms of biological role, involved in the biosynthesis of the chorismate, which leads to the biosynthesis of aromatic amino acids. Catalyzes the reversible NADPH linked reduction of 3-dehydroshikimate (DHSA) to yield shikimate (SA). This chain is Shikimate dehydrogenase (NADP(+)), found in Lactococcus lactis subsp. lactis (strain IL1403) (Streptococcus lactis).